The chain runs to 283 residues: Pseudokinase OPG198 (283 aa).

Positions 1 and 30 each coordinate ATP. A Protein kinase domain is found at 1–283 (MESFKYCFDN…DRLRRLFIQD (283 aa)).

The protein belongs to the protein kinase superfamily. Ser/Thr protein kinase family. Poxviruses subfamily. As to quaternary structure, interacts with B1/VPK1. Interacts with host VRK1. Interacts with host VRK2.

The protein resides in the host nucleus. Its activity is regulated as follows. Both catalytically active kinases B1/VPK1 and host VRK2 repress B12 inhibitory activity in a B1/VPK1 deletion mutant strain. Its function is as follows. Pseudokinase that plays a role in viral DNA replication repression by activating the antiviral protein BANF1 and inhibiting the activity of host VRK1, a cellular modulator of BANF1. The protein is Pseudokinase OPG198 (OPG198) of Homo sapiens (Human).